We begin with the raw amino-acid sequence, 283 residues long: ATP synthase gamma chain (283 aa).

This sequence belongs to the ATPase gamma chain family. F-type ATPases have 2 components, CF(1) - the catalytic core - and CF(0) - the membrane proton channel. CF(1) has five subunits: alpha(3), beta(3), gamma(1), delta(1), epsilon(1). CF(0) has three main subunits: a, b and c.

It localises to the cell inner membrane. In terms of biological role, produces ATP from ADP in the presence of a proton gradient across the membrane. The gamma chain is believed to be important in regulating ATPase activity and the flow of protons through the CF(0) complex. This chain is ATP synthase gamma chain, found in Ehrlichia ruminantium (strain Welgevonden).